A 181-amino-acid chain; its full sequence is Large ribosomal subunit protein uL5 (181 aa).

It belongs to the universal ribosomal protein uL5 family. In terms of assembly, part of the 50S ribosomal subunit; contacts the 5S rRNA and probably tRNA. Forms a bridge to the 30S subunit in the 70S ribosome.

Functionally, this is one of the proteins that bind and probably mediate the attachment of the 5S RNA into the large ribosomal subunit, where it forms part of the central protuberance. In the 70S ribosome it contacts protein S13 of the 30S subunit (bridge B1b), connecting the 2 subunits; this bridge is implicated in subunit movement. May contact the P site tRNA; the 5S rRNA and some of its associated proteins might help stabilize positioning of ribosome-bound tRNAs. This Methanococcus maripaludis (strain C7 / ATCC BAA-1331) protein is Large ribosomal subunit protein uL5.